The chain runs to 479 residues: Probable periplasmic serine endoprotease DegP-like (479 aa).

The N-terminal stretch at 1-27 is a signal peptide; it reads MSMPSLKKYAAALFAVFLMGQSVAAHA. Active-site charge relay system residues include His118, Asp148, and Ser221. Residues 219–221 and 276–280 each bind substrate; these read GNS and LGVVI. PDZ domains are found at residues 265 to 356 and 362 to 468; these read LKAS…VREG and KVAV…LRQG. Residues 368–390 form a disordered region; the sequence is MPADDGDEATNDAAPSAERSSNR.

Belongs to the peptidase S1C family.

Its subcellular location is the periplasm. The enzyme catalyses Acts on substrates that are at least partially unfolded. The cleavage site P1 residue is normally between a pair of hydrophobic residues, such as Val-|-Val.. Might be efficient in the degradation of transiently denatured and unfolded proteins which accumulate in the periplasm following stress conditions. The sequence is that of Probable periplasmic serine endoprotease DegP-like from Pseudomonas fulva (strain 12-X).